We begin with the raw amino-acid sequence, 1896 residues long: Trinucleotide repeat-containing gene 6A protein (1896 aa).

Composition is skewed to basic and acidic residues over residues 1 to 21 and 39 to 57; these read MREL…RDLV and KKKE…KVPE. Disordered stretches follow at residues 1-137, 159-209, 222-250, and 257-276; these read MREL…LLKR, SESS…DCST, EAWP…SESE, and ASGN…GLGS. Positions 1-917 are interaction with argonaute family proteins; it reads MRELEAKATK…GDPPKCNQSL (917 aa). 2 stretches are compositionally biased toward low complexity: residues 69-93 and 101-113; these read ANSD…ASNQ and QQPQ…QQPQ. Basic residues predominate over residues 125 to 137; that stretch reads RFRHQEHKQLLKR. The sufficient for interaction with AGO1, AGO3 and AGO4 stretch occupies residues 239–488; that stretch reads IDADSASNSE…QAPSVMNGTS (250 aa). Sufficient for interaction with AGO2 stretches follow at residues 255 to 331, 303 to 384, 325 to 424, 394 to 480, and 487 to 736; these read VMAS…NAWG, GALI…STIG, NRMN…KVSF, SKVS…QIQA, and TSLS…NGTE. Composition is skewed to polar residues over residues 396–410 and 417–429; these read VSGS…SLQE and SGTQ…GQPQ. Disordered regions lie at residues 396 to 461, 548 to 683, 703 to 998, 1011 to 1126, and 1143 to 1182; these read VSGS…NELP, FQVN…RRKI, LSNS…DPSK, IPEA…PTGW, and QELN…NKQE. The span at 430–443 shows a compositional bias: low complexity; the sequence is NITTETTGPNNTTN. Residues 444-461 are compositionally biased toward polar residues; sequence FMTSSLPNSGSVQNNELP. The interval 551-1279 is sufficient for interaction with AGO1 and AGO4; the sequence is NTNKGGGVWE…MFGVGNTAAQ (729 aa). A compositionally biased stretch (gly residues) spans 573–584; sequence SGNGANSGGSRR. 2 stretches are compositionally biased toward polar residues: residues 591–617 and 635–647; these read QNTG…SANG and GSAT…QNSV. Residues 665-683 are compositionally biased toward basic and acidic residues; that stretch reads GRLEEKVTGESQSRDRRKI. Residues 703-722 are compositionally biased toward polar residues; the sequence is LSNSGWGQTPIKQNTAWDTE. The span at 723-733 shows a compositional bias: basic and acidic residues; the sequence is TSPRGERKTDN. Serine 724 is modified (phosphoserine). The span at 738 to 766 shows a compositional bias: polar residues; the sequence is WGSSATQTFNSGACTDKTSPNSNDTSSVS. Low complexity predominate over residues 858–871; it reads SSSGGSDSDRSISG. Serine 863 is subject to Phosphoserine. Polar residues-rich tracts occupy residues 876–906 and 924–937; these read GKTS…SSQG and KPVS…QQDI. Phosphoserine is present on serine 976. Composition is skewed to polar residues over residues 1033-1042, 1054-1064, and 1082-1105; these read AVSSKETSSG, TPATTVDNGTS, and AASN…SGPK. The sufficient for interaction with AGO2 stretch occupies residues 1059–1129; that stretch reads VDNGTSAWGK…GSRPTGWEEE (71 aa). Low complexity predominate over residues 1143–1163; it reads QELNSSLNWPPYTKKMSSKGL. A phosphoserine mark is found at serine 1197 and serine 1255. 3 disordered regions span residues 1234–1256, 1273–1306, and 1360–1395; these read GDYN…ESSM, VGNT…PPPL, and QRAQ…QSRQ. Low complexity-rich tracts occupy residues 1284-1296 and 1360-1376; these read QQPP…SSQP and QRAQ…RQQQ. Threonine 1406 is modified (phosphothreonine). 2 disordered regions span residues 1512–1570 and 1659–1685; these read MNSS…VTPG and PKNI…WDNS. At serine 1520 the chain carries Phosphoserine. The segment at 1605–1896 is sufficient for interaction with AGO2; it reads TSAWSSIRAS…DHLGGGGESM (292 aa). The RRM domain occupies 1716–1788; sequence NWLVLKNLTP…TTILAEFASE (73 aa). Residues serine 1804 and serine 1825 each carry the phosphoserine modification.

Belongs to the GW182 family. Interacts with AGO2. Interacts with AGO1, AGO3 and AGO4. Interacts with CNOT1; the interaction is direct and mediates the association with the CCR4-NOT complex. Interacts with ZC3H12A. Interacts with SND1. Interacts with GARRE1.

Its subcellular location is the cytoplasm. The protein localises to the P-body. Plays a role in RNA-mediated gene silencing by both micro-RNAs (miRNAs) and short interfering RNAs (siRNAs). Required for miRNA-dependent repression of translation and for siRNA-dependent endonucleolytic cleavage of complementary mRNAs by argonaute family proteins. As a scaffolding protein, associates with argonaute proteins bound to partially complementary mRNAs, and can simultaneously recruit CCR4-NOT and PAN deadenylase complexes. This is Trinucleotide repeat-containing gene 6A protein (Tnrc6a) from Mus musculus (Mouse).